The sequence spans 488 residues: Microtubule-destabilizing protein 60 (488 aa).

Positions 25-56 (AQEVSRFSENSNPNFVSHSTPLEKSSKSSAQK) are enriched in polar residues. Disordered stretches follow at residues 25 to 71 (AQEV…VFSP), 262 to 304 (HASV…TKKQ), and 436 to 457 (DRPF…PKFN). The span at 264–280 (SVSSSWDNSVSSLNSNG) shows a compositional bias: low complexity.

It belongs to the TPX2 family.

The protein resides in the cytoplasm. It is found in the cytoskeleton. Its function is as follows. Binds directly to microtubules. Microtubule-destabilizing protein involved in the PIF3-dependent positive regulation of hypocotyl cell elongation via the modulation of cortical microtubules dynamic in response to light and ethylene signaling. Promotes submergence-induced and ethylene-dependent underwater hypocotyl elongation. In Arabidopsis thaliana (Mouse-ear cress), this protein is Microtubule-destabilizing protein 60.